Reading from the N-terminus, the 363-residue chain is uncharacterized protein (363 aa).

7 helical membrane passes run 20 to 40 (WFFT…NTNI), 63 to 83 (INFA…FLVM), 101 to 121 (FPLI…GVQS), 141 to 161 (SVWQ…FTAF), 186 to 206 (FSLL…IMLA), 227 to 247 (IFKY…CVVL), and 268 to 288 (FLIV…WYVL). The tract at residues 329–363 (PRADLTPNDTLHMESKKKPLSQSPRVVIEEEDVAE) is disordered.

The protein localises to the membrane. This is an uncharacterized protein from Caenorhabditis elegans.